The primary structure comprises 379 residues: Queuine tRNA-ribosyltransferase (379 aa).

The Proton acceptor role is filled by Asp94. Residues 94-98 (DSGGF), Asp148, Gln191, and Gly218 contribute to the substrate site. The interval 249 to 255 (GVGSPDA) is RNA binding. The Nucleophile role is filled by Asp268. The segment at 273-277 (TRIAR) is RNA binding; important for wobble base 34 recognition. The Zn(2+) site is built by Cys306, Cys308, Cys311, and His337.

It belongs to the queuine tRNA-ribosyltransferase family. As to quaternary structure, homodimer. Within each dimer, one monomer is responsible for RNA recognition and catalysis, while the other monomer binds to the replacement base PreQ1. Requires Zn(2+) as cofactor.

The catalysed reaction is 7-aminomethyl-7-carbaguanine + guanosine(34) in tRNA = 7-aminomethyl-7-carbaguanosine(34) in tRNA + guanine. The protein operates within tRNA modification; tRNA-queuosine biosynthesis. Catalyzes the base-exchange of a guanine (G) residue with the queuine precursor 7-aminomethyl-7-deazaguanine (PreQ1) at position 34 (anticodon wobble position) in tRNAs with GU(N) anticodons (tRNA-Asp, -Asn, -His and -Tyr). Catalysis occurs through a double-displacement mechanism. The nucleophile active site attacks the C1' of nucleotide 34 to detach the guanine base from the RNA, forming a covalent enzyme-RNA intermediate. The proton acceptor active site deprotonates the incoming PreQ1, allowing a nucleophilic attack on the C1' of the ribose to form the product. After dissociation, two additional enzymatic reactions on the tRNA convert PreQ1 to queuine (Q), resulting in the hypermodified nucleoside queuosine (7-(((4,5-cis-dihydroxy-2-cyclopenten-1-yl)amino)methyl)-7-deazaguanosine). The chain is Queuine tRNA-ribosyltransferase from Macrococcus caseolyticus (strain JCSC5402) (Macrococcoides caseolyticum).